A 484-amino-acid polypeptide reads, in one-letter code: Protein arginine methyltransferase NDUFAF7 homolog, mitochondrial (484 aa).

A mitochondrion-targeting transit peptide spans 1–12 (MFRSITQRVIRN).

This sequence belongs to the NDUFAF7 family. As to quaternary structure, homodimer. Interacts with ndufs2.

The protein localises to the mitochondrion. The enzyme catalyses L-arginyl-[protein] + 2 S-adenosyl-L-methionine = N(omega),N(omega)'-dimethyl-L-arginyl-[protein] + 2 S-adenosyl-L-homocysteine + 2 H(+). Functionally, involved in the assembly or stability of mitochondrial NADH:ubiquinone oxidoreductase complex (complex I). Acts as an arginine methyltransferase and probably acts by mediating arginine methylation of ndufs2. The sequence is that of Protein arginine methyltransferase NDUFAF7 homolog, mitochondrial from Dictyostelium discoideum (Social amoeba).